Reading from the N-terminus, the 195-residue chain is N-terminal acetyltransferase B complex catalytic subunit NAT3 (195 aa).

The N-acetyltransferase domain maps to 2–172 (TTIQPFEPVD…DAFDMRKAMA (171 aa)).

Belongs to the acetyltransferase family. GNAT subfamily. In terms of assembly, component of the N-terminal acetyltransferase B (NatB) complex, which is composed of NAT3 and MDM20.

It localises to the cytoplasm. The catalysed reaction is N-terminal L-methionyl-L-asparaginyl-[protein] + acetyl-CoA = N-terminal N(alpha)-acetyl-L-methionyl-L-asparaginyl-[protein] + CoA + H(+). It catalyses the reaction N-terminal L-methionyl-L-glutaminyl-[protein] + acetyl-CoA = N-terminal N(alpha)-acetyl-L-methionyl-L-glutaminyl-[protein] + CoA + H(+). The enzyme catalyses N-terminal L-methionyl-L-aspartyl-[protein] + acetyl-CoA = N-terminal N(alpha)-acetyl-L-methionyl-L-aspartyl-[protein] + CoA + H(+). It carries out the reaction N-terminal L-methionyl-L-glutamyl-[protein] + acetyl-CoA = N-terminal N(alpha)-acetyl-L-methionyl-L-glutamyl-[protein] + CoA + H(+). Functionally, catalytic subunit of the NatB N-terminal acetyltransferase, which catalyzes acetylation of the amino-terminal methionine residues of all proteins beginning with Met-Asp or Met-Glu and of some proteins beginning with Met-Asn, Met-Gln or Met-Met. NatB acetylates TPM1 protein and regulates tropomyocin-actin interactions, it is presumed to N-acetylate 15% of all yeast proteins. This is N-terminal acetyltransferase B complex catalytic subunit NAT3 from Saccharomyces cerevisiae (strain ATCC 204508 / S288c) (Baker's yeast).